Reading from the N-terminus, the 162-residue chain is HTH-type transcriptional regulator IscR (162 aa).

One can recognise an HTH rrf2-type domain in the interval 2–131 (RLTSKGRYAV…NNITLGELVN (130 aa)). A DNA-binding region (H-T-H motif) is located at residues 28-51 (LADISERQGISLSYLEQLFSRLRK). Residues Cys92, Cys98, and Cys104 each coordinate [2Fe-2S] cluster. The tract at residues 140-162 (GRQHTHDAPRTRTQDAIDVKLRA) is disordered. The segment covering 143-162 (HTHDAPRTRTQDAIDVKLRA) has biased composition (basic and acidic residues).

[2Fe-2S] cluster is required as a cofactor.

Functionally, regulates the transcription of several operons and genes involved in the biogenesis of Fe-S clusters and Fe-S-containing proteins. The polypeptide is HTH-type transcriptional regulator IscR (Shigella flexneri).